Here is a 412-residue protein sequence, read N- to C-terminus: Putative competence-damage inducible protein (412 aa).

The protein belongs to the CinA family.

This chain is Putative competence-damage inducible protein, found in Bacillus cereus (strain G9842).